A 149-amino-acid chain; its full sequence is Transcriptional repressor NrdR (149 aa).

Residues Cys-3–Cys-34 fold into a zinc finger. The ATP-cone domain maps to Pro-49 to Glu-139.

Belongs to the NrdR family. Zn(2+) serves as cofactor.

Negatively regulates transcription of bacterial ribonucleotide reductase nrd genes and operons by binding to NrdR-boxes. This is Transcriptional repressor NrdR from Shigella flexneri.